The chain runs to 205 residues: Small ribosomal subunit protein uS4 (205 aa).

The interval 1–49 (MSKRQSAKYKLDRRMGENIWGRPKSPVNRREYGPGQHGQRRKGKLSDFG) is disordered. An S4 RNA-binding domain is found at 94-157 (SRLDAIVFRA…KQLTVVLESV (64 aa)).

It belongs to the universal ribosomal protein uS4 family. Part of the 30S ribosomal subunit. Contacts protein S5. The interaction surface between S4 and S5 is involved in control of translational fidelity.

Its function is as follows. One of the primary rRNA binding proteins, it binds directly to 16S rRNA where it nucleates assembly of the body of the 30S subunit. Functionally, with S5 and S12 plays an important role in translational accuracy. In Chelativorans sp. (strain BNC1), this protein is Small ribosomal subunit protein uS4.